Reading from the N-terminus, the 579-residue chain is UvrABC system protein C (579 aa).

Positions 12 to 89 (DATGVYIFRD…IKRYRPPYNV (78 aa)) constitute a GIY-YIG domain. The UVR domain occupies 193 to 228 (QEVIEVLEEEMKEASERLEFERAARIRDQIESIREV).

It belongs to the UvrC family. Interacts with UvrB in an incision complex.

It is found in the cytoplasm. The UvrABC repair system catalyzes the recognition and processing of DNA lesions. UvrC both incises the 5' and 3' sides of the lesion. The N-terminal half is responsible for the 3' incision and the C-terminal half is responsible for the 5' incision. The chain is UvrABC system protein C from Methanothermobacter thermautotrophicus (strain ATCC 29096 / DSM 1053 / JCM 10044 / NBRC 100330 / Delta H) (Methanobacterium thermoautotrophicum).